The following is a 130-amino-acid chain: Large ribosomal subunit protein bL12 (130 aa).

Belongs to the bacterial ribosomal protein bL12 family. Homodimer. Part of the ribosomal stalk of the 50S ribosomal subunit. Forms a multimeric L10(L12)X complex, where L10 forms an elongated spine to which 2 to 4 L12 dimers bind in a sequential fashion. Binds GTP-bound translation factors.

In terms of biological role, forms part of the ribosomal stalk which helps the ribosome interact with GTP-bound translation factors. Is thus essential for accurate translation. The sequence is that of Large ribosomal subunit protein bL12 from Cutibacterium acnes (strain DSM 16379 / KPA171202) (Propionibacterium acnes).